The following is a 314-amino-acid chain: Torsin-2A (314 aa).

The first 19 residues, 1-19, serve as a signal peptide directing secretion; that stretch reads MAVRWWIIPMLLLVPGSSG. 86 to 93 lines the ATP pocket; sequence GWSGTGKT. Asn-142 and Asn-283 each carry an N-linked (GlcNAc...) asparagine glycan.

The protein belongs to the ClpA/ClpB family. Torsin subfamily. As to quaternary structure, homohexamer.

It is found in the endoplasmic reticulum lumen. This is Torsin-2A (tor2a) from Xenopus laevis (African clawed frog).